The following is a 197-amino-acid chain: Crossover junction endodeoxyribonuclease RuvC (197 aa).

Catalysis depends on residues Asp-7, Glu-68, and Asp-141. Positions 7, 68, and 141 each coordinate Mg(2+). 2 stretches are compositionally biased toward low complexity: residues 165 to 181 and 188 to 197; these read AAPA…TPAR and APARRPAGAS. A disordered region spans residues 165-197; sequence AAPAAPVSRPAPATPARRSPRPAAPARRPAGAS.

This sequence belongs to the RuvC family. In terms of assembly, homodimer which binds Holliday junction (HJ) DNA. The HJ becomes 2-fold symmetrical on binding to RuvC with unstacked arms; it has a different conformation from HJ DNA in complex with RuvA. In the full resolvosome a probable DNA-RuvA(4)-RuvB(12)-RuvC(2) complex forms which resolves the HJ. Requires Mg(2+) as cofactor.

The protein resides in the cytoplasm. The catalysed reaction is Endonucleolytic cleavage at a junction such as a reciprocal single-stranded crossover between two homologous DNA duplexes (Holliday junction).. Functionally, the RuvA-RuvB-RuvC complex processes Holliday junction (HJ) DNA during genetic recombination and DNA repair. Endonuclease that resolves HJ intermediates. Cleaves cruciform DNA by making single-stranded nicks across the HJ at symmetrical positions within the homologous arms, yielding a 5'-phosphate and a 3'-hydroxyl group; requires a central core of homology in the junction. The consensus cleavage sequence is 5'-(A/T)TT(C/G)-3'. Cleavage occurs on the 3'-side of the TT dinucleotide at the point of strand exchange. HJ branch migration catalyzed by RuvA-RuvB allows RuvC to scan DNA until it finds its consensus sequence, where it cleaves and resolves the cruciform DNA. The protein is Crossover junction endodeoxyribonuclease RuvC of Frankia alni (strain DSM 45986 / CECT 9034 / ACN14a).